Here is a 410-residue protein sequence, read N- to C-terminus: DNA primase small subunit (410 aa).

Active-site residues include glutamate 43, aspartate 106, and aspartate 108. Positions 118–129 (CCKDATVCPKCW) match the Zinc knuckle motif motif.

Belongs to the eukaryotic-type primase small subunit family. Heterodimer of a small subunit and a large subunit.

In terms of biological role, DNA primase is the polymerase that synthesizes small RNA primers for the Okazaki fragments made during discontinuous DNA replication. The polypeptide is DNA primase small subunit (pri-1) (Caenorhabditis elegans).